The chain runs to 318 residues: Ribosomal RNA small subunit methyltransferase H (318 aa).

Residues 34 to 36 (GGY), aspartate 52, phenylalanine 79, aspartate 100, and glutamine 107 contribute to the S-adenosyl-L-methionine site. The disordered stretch occupies residues 286-318 (GPAPDEARANPRARSAKLRAAARTAAPAWETVS). Low complexity predominate over residues 303–318 (LRAAARTAAPAWETVS).

The protein belongs to the methyltransferase superfamily. RsmH family.

Its subcellular location is the cytoplasm. The enzyme catalyses cytidine(1402) in 16S rRNA + S-adenosyl-L-methionine = N(4)-methylcytidine(1402) in 16S rRNA + S-adenosyl-L-homocysteine + H(+). Functionally, specifically methylates the N4 position of cytidine in position 1402 (C1402) of 16S rRNA. This Paramagnetospirillum magneticum (strain ATCC 700264 / AMB-1) (Magnetospirillum magneticum) protein is Ribosomal RNA small subunit methyltransferase H.